We begin with the raw amino-acid sequence, 262 residues long: Large ribosomal subunit protein eL8B (262 aa).

Positions 1–36 (MAPKGKKVAPAPLATKSAKSSESKNPLFESTPKNFG) are disordered.

The protein belongs to the eukaryotic ribosomal protein eL8 family. Component of the large ribosomal subunit. Mature ribosomes consist of a small (40S) and a large (60S) subunit. The 40S subunit contains about 32 different proteins and 1 molecule of RNA (18S). The 60S subunit contains 45 different proteins and 3 molecules of RNA (25S, 5.8S and 5S).

It is found in the cytoplasm. Component of the ribosome, a large ribonucleoprotein complex responsible for the synthesis of proteins in the cell. The small ribosomal subunit (SSU) binds messenger RNAs (mRNAs) and translates the encoded message by selecting cognate aminoacyl-transfer RNA (tRNA) molecules. The large subunit (LSU) contains the ribosomal catalytic site termed the peptidyl transferase center (PTC), which catalyzes the formation of peptide bonds, thereby polymerizing the amino acids delivered by tRNAs into a polypeptide chain. The nascent polypeptides leave the ribosome through a tunnel in the LSU and interact with protein factors that function in enzymatic processing, targeting, and the membrane insertion of nascent chains at the exit of the ribosomal tunnel. The polypeptide is Large ribosomal subunit protein eL8B (Candida albicans (strain SC5314 / ATCC MYA-2876) (Yeast)).